A 199-amino-acid polypeptide reads, in one-letter code: Chaperone protein TorD (199 aa).

It belongs to the TorD/DmsD family. TorD subfamily.

Its subcellular location is the cytoplasm. Its function is as follows. Involved in the biogenesis of TorA. Acts on TorA before the insertion of the molybdenum cofactor and, as a result, probably favors a conformation of the apoenzyme that is competent for acquiring the cofactor. This chain is Chaperone protein TorD, found in Escherichia coli (strain ATCC 8739 / DSM 1576 / NBRC 3972 / NCIMB 8545 / WDCM 00012 / Crooks).